Here is a 320-residue protein sequence, read N- to C-terminus: Aristolochene synthase (320 aa).

Over residues 1-14 (MKKPNGTNGASSSL) the composition is skewed to polar residues. Residues 1–20 (MKKPNGTNGASSSLEPPPST) form a disordered region. Aspartate 90, asparagine 219, serine 223, and glutamate 227 together coordinate Mg(2+). Residues arginine 314 and tyrosine 315 each contribute to the (2E,6E)-farnesyl diphosphate site.

It belongs to the terpene synthase family. In terms of assembly, homodimer. Mg(2+) is required as a cofactor.

The catalysed reaction is (2E,6E)-farnesyl diphosphate = (+)-aristolochene + diphosphate. It functions in the pathway sesquiterpene biosynthesis; aristolochene biosynthesis; aristolochene from farnesyl diphosphate: step 1/1. In terms of biological role, catalyzes the cyclization of trans,trans-farnesyl diphosphate (FPP) to the bicyclic sesquiterpene aristolochene. Produces germacrene A as an enzyme-bound intermediate that is not released by the enzyme, but is further cyclized to produce aristolochene. Aristolochene is the likely parent compound for a number of sesquiterpenoid toxins produced by filamentous fungi. This is Aristolochene synthase (Ari1) from Aspergillus terreus.